The following is a 177-amino-acid chain: MKYSRIVVMGPPGCGKGTQSSLISEKYEIPHVSSGDIIREEMKKSSKEATVIREMVNSGRLAPDEIVNELVLKKIRSMSKYILDGYPRRIEQAGMLGDDVDLVIFIDVDEDTCISRICGRNEGRDDDDEEVGRKRCMVYNKETAPVLEFYKRHGKLLTINGCASPGTVFEEIRRSIE.

13–18 provides a ligand contact to ATP; the sequence is GCGKGT. The segment at 33–62 is NMP; the sequence is SSGDIIREEMKKSSKEATVIREMVNSGRLA. AMP is bound by residues serine 34, arginine 39, 60–62, 85–88, and glutamine 92; these read RLA and GYPR. The segment at 119-127 is LID; sequence GRNEGRDDD. Residue arginine 120 participates in ATP binding. Residues arginine 124 and arginine 135 each coordinate AMP.

Belongs to the adenylate kinase family. In terms of assembly, monomer.

The protein resides in the cytoplasm. The enzyme catalyses AMP + ATP = 2 ADP. Catalyzes the reversible transfer of the terminal phosphate group between ATP and AMP. Plays an important role in cellular energy homeostasis and in adenine nucleotide metabolism. The sequence is that of Adenylate kinase from Encephalitozoon cuniculi (strain GB-M1) (Microsporidian parasite).